The following is a 165-amino-acid chain: Growth arrest and DNA damage-inducible protein GADD45 alpha (165 aa).

Thr-2 bears the Phosphothreonine mark.

Belongs to the GADD45 family. In terms of assembly, interacts with AURKA, PCNA, GADD45GIP1 and MAPK14.

It localises to the nucleus. Functionally, might affect PCNA interaction with some CDK (cell division protein kinase) complexes; stimulates DNA excision repair in vitro and inhibits entry of cells into S phase. In T-cells, functions as a regulator of p38 MAPKs by inhibiting p88 phosphorylation and activity. The protein is Growth arrest and DNA damage-inducible protein GADD45 alpha (Gadd45a) of Rattus norvegicus (Rat).